The following is a 701-amino-acid chain: Protein mono-ADP-ribosyltransferase PARP12 (701 aa).

3 C3H1-type zinc fingers span residues 94–119 (LCRF…HSLT), 150–179 (WLLP…IKLH), and 180–202 (ICQY…HDFS). The disordered stretch occupies residues 234–268 (KNKSSAPSRVPPLFVPQGTSERKDSSGSVSPNTLS). S258 carries the post-translational modification Phosphoserine. The span at 259–268 (SGSVSPNTLS) shows a compositional bias: polar residues. 2 C3H1-type zinc fingers span residues 270 to 297 (EEGD…HFHL) and 271 to 296 (EGDQ…VHFH). 2 WWE domains span residues 298–361 (PYRW…RLST) and 364–458 (SVTK…KVCR). An ADP-ribosylcysteine modification is found at C474. The PARP catalytic domain occupies 484–698 (IPDYWDSSAL…ILLALGSLFS (215 aa)). 2 positions are modified to ADP-ribosyl aspartic acid: D600 and D611.

Belongs to the ARTD/PARP family. As to quaternary structure, interacts with PARP11; this interaction plays a key role in zika virus suppression. Interacts with ISG15. In terms of processing, auto-mono-ADP-ribosylated. Phosphorylated by PRKD1.

The protein localises to the nucleus. The protein resides in the golgi apparatus. It is found in the trans-Golgi network. Its subcellular location is the cytoplasm. It localises to the stress granule. It carries out the reaction L-aspartyl-[protein] + NAD(+) = 4-O-(ADP-D-ribosyl)-L-aspartyl-[protein] + nicotinamide. The catalysed reaction is L-cysteinyl-[protein] + NAD(+) = S-(ADP-D-ribosyl)-L-cysteinyl-[protein] + nicotinamide + H(+). In terms of biological role, mono-ADP-ribosyltransferase that mediates mono-ADP-ribosylation of target proteins. Acts as an antiviral factor by cooperating with PARP11 to suppress Zika virus replication. Displays anti-alphavirus activity during IFN-gamma immune activation by directly ADP-ribosylating the alphaviral non-structural proteins nsP3 and nsP4. Acts as a component of the PRKD1-driven regulatory cascade that selectively controls a major branch of the basolateral transport pathway by catalyzing the MARylation of GOLGA1. Acts also as a key regulator of mitochondrial function, protein translation, and inflammation. Inhibits PINK1/Parkin-dependent mitophagy and promotes cartilage degeneration by inhibiting the ubiquitination and SUMOylation of MFN1/2 by upregulating ISG15 and ISGylation. This Homo sapiens (Human) protein is Protein mono-ADP-ribosyltransferase PARP12.